Here is a 584-residue protein sequence, read N- to C-terminus: Aspartate--tRNA(Asp/Asn) ligase (584 aa).

Glu-177 contributes to the L-aspartate binding site. The interval 201–204 is aspartate; it reads QLFK. Arg-223 is an L-aspartate binding site. Residues 223 to 225 and Gln-232 each bind ATP; that span reads RDE. His-447 contributes to the L-aspartate binding site. Glu-481 serves as a coordination point for ATP. Arg-488 contacts L-aspartate. 533–536 is a binding site for ATP; that stretch reads GLDR.

It belongs to the class-II aminoacyl-tRNA synthetase family. Type 1 subfamily. As to quaternary structure, homodimer.

The protein resides in the cytoplasm. The catalysed reaction is tRNA(Asx) + L-aspartate + ATP = L-aspartyl-tRNA(Asx) + AMP + diphosphate. In terms of biological role, aspartyl-tRNA synthetase with relaxed tRNA specificity since it is able to aspartylate not only its cognate tRNA(Asp) but also tRNA(Asn). Reaction proceeds in two steps: L-aspartate is first activated by ATP to form Asp-AMP and then transferred to the acceptor end of tRNA(Asp/Asn). The chain is Aspartate--tRNA(Asp/Asn) ligase from Chlamydia caviae (strain ATCC VR-813 / DSM 19441 / 03DC25 / GPIC) (Chlamydophila caviae).